We begin with the raw amino-acid sequence, 485 residues long: Glutamate--tRNA ligase 2 (485 aa).

A 'HIGH' region motif is present at residues 10 to 20 (PSPTGPIHIGN). The short motif at 252-256 (KLSKR) is the 'KMSKS' region element. Lys-255 contributes to the ATP binding site.

It belongs to the class-I aminoacyl-tRNA synthetase family. Glutamate--tRNA ligase type 1 subfamily. Monomer.

The protein localises to the cytoplasm. It catalyses the reaction tRNA(Glu) + L-glutamate + ATP = L-glutamyl-tRNA(Glu) + AMP + diphosphate. In terms of biological role, catalyzes the attachment of glutamate to tRNA(Glu) in a two-step reaction: glutamate is first activated by ATP to form Glu-AMP and then transferred to the acceptor end of tRNA(Glu). This chain is Glutamate--tRNA ligase 2, found in Caldanaerobacter subterraneus subsp. tengcongensis (strain DSM 15242 / JCM 11007 / NBRC 100824 / MB4) (Thermoanaerobacter tengcongensis).